We begin with the raw amino-acid sequence, 1715 residues long: Neurexin-2 (1715 aa).

The N-terminal stretch at 1–29 is a signal peptide; that stretch reads MALGSRWRPPPQLPPLLLLLALVAGVRGL. The 177-residue stretch at 30–206 folds into the Laminin G-like 1 domain; the sequence is EFGGGPGQWA…LRGAAADPLC (177 aa). The Extracellular portion of the chain corresponds to 30–1639; sequence EFGGGPGQWA…EVIRESSSTT (1610 aa). Asn60 carries N-linked (GlcNAc...) asparagine glycosylation. Residues 202–242 enclose the EGF-like 1 domain; it reads ADPLCAPARNPCANGGLCTVLAPGEVGCDCSHTGFGGKFCS. 3 disulfides stabilise this stretch: Cys206–Cys219, Cys213–Cys229, and Cys231–Cys241. 2 Laminin G-like domains span residues 289–486 and 493–686; these read VATF…SFRC and DPVT…APFC. Asp335 is a binding site for Ca(2+). N-linked (GlcNAc...) asparagine glycosylation is present at Asn338. Ca(2+) contacts are provided by Leu352 and Met420. Cystine bridges form between Cys450–Cys486, Cys657–Cys686, Cys694–Cys705, Cys699–Cys714, and Cys716–Cys726. One can recognise an EGF-like 2 domain in the interval 690–727; sequence TLKQCASAPCRNGGICREGWNRFVCDCIGTGFLGRVCE. Laminin G-like domains are found at residues 732–907 and 921–1096; these read VLSY…ITYC and DPVT…ERGC. Residues Asp779 and Leu796 each contribute to the Ca(2+) site. An N-linked (GlcNAc...) asparagine glycan is attached at Asn844. Residue Arg857 participates in Ca(2+) binding. Disulfide bonds link Cys1068–Cys1096, Cys1103–Cys1114, Cys1108–Cys1123, and Cys1125–Cys1135. The 38-residue stretch at 1099-1136 folds into the EGF-like 3 domain; it reads PSTTCTEESCANQGVCLQQWDGFTCDCTMTSYGGPVCN. The 209-residue stretch at 1140–1348 folds into the Laminin G-like 6 domain; the sequence is TTYIFGKGGA…HLRLVGEGPS (209 aa). Asp1192 and Val1209 together coordinate Ca(2+). N-linked (GlcNAc...) asparagine glycosylation occurs at Asn1239. 2 residues coordinate Ca(2+): Ile1291 and Asn1293. Residue Ser1403 is glycosylated (O-linked (Xyl...) (heparan sulfate) serine). Disordered stretches follow at residues 1461–1511, 1529–1549, and 1583–1626; these read ATQD…LPPT, LLSPRKPAPRPNLRTDGATGA, and LGPG…RGPP. Residues 1640-1660 traverse the membrane as a helical segment; that stretch reads GMVVGIVAAAALCILILLYAM. Residues 1661 to 1715 lie on the Cytoplasmic side of the membrane; sequence YKYRNRDEGSYQVDQSRNYISNSAQSNGAVVKEKAPAAPKTPSKAKKNKDKEYYV. The tract at residues 1682–1715 is disordered; that stretch reads NSAQSNGAVVKEKAPAAPKTPSKAKKNKDKEYYV.

This sequence belongs to the neurexin family. The laminin G-like domain 1 binds to NXPH1. Interacts with PATJ. Interacts with CBLN1, CBLN2 and, less avidly, with CBLN4. Specific isoforms bind neuroligins NLGN1, NLGN2 and NLGN3. Isoform 5c/alpha-2C binds to alpha-dystroglycan. Interacts (via Laminin G-like 1 domain) with IGSF21 (Ig-like 1 domain) in a trans-interaction manner. Interacts with CLSTN3. O-glycosylated; contains heparan sulfate. Heparan sulfate attachment is required for synapse development by mediating interactions with neuroligins. In terms of tissue distribution, brain (neuronal synapse).

Its subcellular location is the presynaptic cell membrane. Functionally, neuronal cell surface protein that may be involved in cell recognition and cell adhesion. May mediate intracellular signaling. The polypeptide is Neurexin-2 (Nrxn2) (Rattus norvegicus (Rat)).